The chain runs to 399 residues: MPFPLNRTDTALVISPSEFRIIGIFISICCIIGVLGNLLIIIVFAKRRSVRRPINFFVLNLAVSDLIVALLGYPMTAASAFSNRWIFDNIGCKIYAFLCFNSGVISIMTHAALSFCRYIIICQYGYRKKITQTTVLRTLFSIWSFAMFWTLSPLFGWSSYVIEVVPVSCSVNWYGHGLGDVSYTISVIVAVYVFPLSIIVFSYGMILQEKVCKDSRKNGIRAQQRYTPRFIQDIEQRVTFISFLMMAAFMVAWTPYAIMSALAIGSFNVENSFAALPTLFAKASCAYNPFIYAFTNANFRDTVVEIMAPWTTRRVGVSTLPWPQVTYYPRRRTSAVNTTDIEFPDDNIFIVNSSVNGPTVKREKIVQRNPINVRLGIKIEPRDSRAATENTFTADFSVI.

At 1–17 the chain is on the extracellular side; sequence MPFPLNRTDTALVISPS. The N-linked (GlcNAc...) asparagine glycan is linked to Asn6. A helical membrane pass occupies residues 18-43; that stretch reads EFRIIGIFISICCIIGVLGNLLIIIV. The Cytoplasmic segment spans residues 44-55; sequence FAKRRSVRRPIN. The chain crosses the membrane as a helical span at residues 56–81; sequence FFVLNLAVSDLIVALLGYPMTAASAF. The Extracellular segment spans residues 82 to 95; that stretch reads SNRWIFDNIGCKIY. Cys92 and Cys169 are oxidised to a cystine. Residues 96 to 115 form a helical membrane-spanning segment; the sequence is AFLCFNSGVISIMTHAALSF. Topologically, residues 116-134 are cytoplasmic; that stretch reads CRYIIICQYGYRKKITQTT. The chain crosses the membrane as a helical span at residues 135–158; it reads VLRTLFSIWSFAMFWTLSPLFGWS. Over 159–182 the chain is Extracellular; sequence SYVIEVVPVSCSVNWYGHGLGDVS. The chain crosses the membrane as a helical span at residues 183–210; the sequence is YTISVIVAVYVFPLSIIVFSYGMILQEK. Topologically, residues 211–240 are cytoplasmic; it reads VCKDSRKNGIRAQQRYTPRFIQDIEQRVTF. A helical transmembrane segment spans residues 241-263; it reads ISFLMMAAFMVAWTPYAIMSALA. Topologically, residues 264–271 are extracellular; the sequence is IGSFNVEN. The helical transmembrane segment at 272-295 threads the bilayer; the sequence is SFAALPTLFAKASCAYNPFIYAFT. Lys282 is subject to N6-(retinylidene)lysine. The Cytoplasmic segment spans residues 296-399; it reads NANFRDTVVE…NTFTADFSVI (104 aa).

The protein belongs to the G-protein coupled receptor 1 family. Opsin subfamily. In terms of processing, phosphorylated on some or all of the serine and threonine residues present in the C-terminal region. As to expression, retina. Expressed in the hyperpolarizing cell layer of the photoreceptor cells with its photoreceptive region adjacent to the lens.

The protein localises to the membrane. Functionally, visual pigments are the light-absorbing molecules that mediate vision. They consist of an apoprotein, opsin, covalently linked to cis-retinal. This chain is Rhodopsin, G0-coupled (SCOP2), found in Mizuhopecten yessoensis (Japanese scallop).